The primary structure comprises 276 residues: Large ribosomal subunit protein uL2 (276 aa).

The interval 224-276 (VMNPVDHPHGGGEGKAPIGRKSPMTPWGKPTLGYKTRKKKNKSDKFIIRRRKK) is disordered. The span at 258–276 (KTRKKKNKSDKFIIRRRKK) shows a compositional bias: basic residues.

The protein belongs to the universal ribosomal protein uL2 family. In terms of assembly, part of the 50S ribosomal subunit. Forms a bridge to the 30S subunit in the 70S ribosome.

In terms of biological role, one of the primary rRNA binding proteins. Required for association of the 30S and 50S subunits to form the 70S ribosome, for tRNA binding and peptide bond formation. It has been suggested to have peptidyltransferase activity; this is somewhat controversial. Makes several contacts with the 16S rRNA in the 70S ribosome. The sequence is that of Large ribosomal subunit protein uL2 from Geobacillus thermodenitrificans (strain NG80-2).